A 495-amino-acid polypeptide reads, in one-letter code: NADH-ubiquinone oxidoreductase chain 4 (495 aa).

11 helical membrane-spanning segments follow: residues 9 to 29 (YSNLSGLILCPVLGSITPLFI), 39 to 59 (LIGLCASLITFLYSPVPRIQF), 89 to 109 (ISLFFVILTTFLIPICISVGW), 139 to 159 (LLLFYVFPESVPIPMFIIIGV), 173 to 193 (FFLYTLLGSLFMLLAILLILF), 214 to 234 (IFLWIASFASFAVKVPMVPVH), 272 to 292 (FPEATLCSTPFIYTLSAIAII), 313 to 333 (VAHMNLVTIGMFSPNIQGIGG), 335 to 355 (ILPMLSHGLVPSALFLCVGVL), 367 to 387 (YGGLVSTMPNLSTIFFSFTLA), and 413 to 433 (LVATLAALGMILGAAYSLWLY).

Belongs to the complex I subunit 4 family.

It localises to the mitochondrion membrane. The enzyme catalyses a ubiquinone + NADH + 5 H(+)(in) = a ubiquinol + NAD(+) + 4 H(+)(out). Functionally, core subunit of the mitochondrial membrane respiratory chain NADH dehydrogenase (Complex I) that is believed to belong to the minimal assembly required for catalysis. Complex I functions in the transfer of electrons from NADH to the respiratory chain. The immediate electron acceptor for the enzyme is believed to be ubiquinone. In Brassica campestris (Field mustard), this protein is NADH-ubiquinone oxidoreductase chain 4 (ND4).